Here is a 248-residue protein sequence, read N- to C-terminus: Small ribosomal subunit protein uS2 (248 aa).

The protein belongs to the universal ribosomal protein uS2 family.

The polypeptide is Small ribosomal subunit protein uS2 (Herminiimonas arsenicoxydans).